Reading from the N-terminus, the 619-residue chain is Lysophospholipid acyltransferase (619 aa).

The Lumenal portion of the chain corresponds to 1–19 (MYNPVDAVLTKIITNYGID). The helical transmembrane segment at 20 to 39 (SFTLRYAICLLGSFPLNAIL) threads the bilayer. Over 40–51 (KRIPEKRIGLKC) the chain is Cytoplasmic. Residues 52–72 (CFIISMSMFYLFGVLNLVSGF) form a helical membrane-spanning segment. Residues 73-92 (RTLFISTMFTYLISRFYRSK) are Lumenal-facing. A helical transmembrane segment spans residues 93–113 (FMPHLNFMFVMGHLAINHIHA). Residues 114 to 231 (QFLNEQTQTT…GERRQIPKNG (118 aa)) lie on the Cytoplasmic side of the membrane. Catalysis depends on aspartate 146, which acts as the Nucleophile. Residues 232–252 (KLALWKVVQGLAWMILSTLGM) traverse the membrane as a helical segment. Residues 253 to 274 (KHFPVKYVLDKDGFPTRSFIFR) are Lumenal-facing. Residues 275–295 (IHYLFLLGFIHRFKYYAAWTI) traverse the membrane as a helical segment. Residues 296-429 (SEGSCILCGL…TPLPSKKIYD (134 aa)) lie on the Cytoplasmic side of the membrane. Glutamate 297 functions as the Nucleophile in the catalytic mechanism. Residue histidine 382 is part of the active site. The chain crosses the membrane as a helical span at residues 430 to 450 (LVGIYAIKLAFGYMVQPFIIL). Over 451 to 456 (DLKPSL) the chain is Lumenal. Residues 457–477 (MVWGSVYFYVHIIVAFSFFLF) form a helical membrane-spanning segment. At 478–619 (RGPYAKQVTE…SPKPISKKEE (142 aa)) the chain is on the cytoplasmic side. A Phosphoserine modification is found at serine 513. A coiled-coil region spans residues 545–593 (ELEKWDNAKEDWEDFCKDYKEWRNKNGLEIEEENLSKAFERFKQEFSNA). Positions 592-619 (NAASGSGERVRKMSFSGYSPKPISKKEE) are disordered. Residues serine 605, serine 610, and serine 615 each carry the phosphoserine modification.

This sequence belongs to the membrane-bound acyltransferase family.

Its subcellular location is the endoplasmic reticulum membrane. It carries out the reaction a 1-acyl-sn-glycero-3-phosphate + an acyl-CoA = a 1,2-diacyl-sn-glycero-3-phosphate + CoA. It catalyses the reaction a 1-acyl-sn-glycero-3-phosphocholine + an acyl-CoA = a 1,2-diacyl-sn-glycero-3-phosphocholine + CoA. The enzyme catalyses 1-acyl-sn-glycero-3-phospho-(1'-sn-glycerol) + an acyl-CoA = a 1,2-diacyl-sn-glycero-3-phospho-(1'-sn-glycerol) + CoA. The catalysed reaction is a 1-acyl-sn-glycero-3-phospho-(1D-myo-inositol) + an acyl-CoA = a 1,2-diacyl-sn-glycero-3-phospho-(1D-myo-inositol) + CoA. It carries out the reaction a 1-acyl-sn-glycero-3-phospho-L-serine + an acyl-CoA = a 1,2-diacyl-sn-glycero-3-phospho-L-serine + CoA. It catalyses the reaction a 1-acyl-sn-glycero-3-phosphoethanolamine + an acyl-CoA = a 1,2-diacyl-sn-glycero-3-phosphoethanolamine + CoA. The enzyme catalyses 1-(9Z-octadecenoyl)-sn-glycero-3-phosphoethanolamine + (9Z)-octadecenoyl-CoA = 1,2-di-(9Z-octadecenoyl)-sn-glycero-3-phosphoethanolamine + CoA. The catalysed reaction is 1-(9Z-octadecenoyl)-sn-glycero-3-phosphoethanolamine + (9Z)-hexadecenoyl-CoA = 1-(9Z)-octadecenoyl-2-(9Z)-hexadecenoyl-sn-glycero-3-phosphoethanolamine + CoA. It carries out the reaction 1-(9Z-octadecenoyl)-sn-glycero-3-phosphoethanolamine + hexadecanoyl-CoA = 1-(9Z-octadecenoyl)-2-hexadecanoyl-sn-glycero-3-phosphoethanolamine + CoA. It catalyses the reaction 1-(9Z-octadecenoyl)-sn-glycero-3-phosphoethanolamine + tetradecanoyl-CoA = 1-(9Z)-octadecenoyl-2-tetradecanoyl-sn-glycero-3-phosphoethanolamine + CoA. The enzyme catalyses 1-(9Z-octadecenoyl)-sn-glycero-3-phosphate + (9Z)-octadecenoyl-CoA = 1,2-di-(9Z-octadecenoyl)-sn-glycero-3-phosphate + CoA. The catalysed reaction is (9Z)-hexadecenoyl-CoA + 1-hexadecanoyl-sn-glycero-3-phosphocholine = 1-hexadecanoyl-2-(9Z-hexadecenoyl)-sn-glycero-3-phosphocholine + CoA. It carries out the reaction 1-hexadecanoyl-sn-glycero-3-phosphocholine + (9Z)-octadecenoyl-CoA = 1-hexadecanoyl-2-(9Z-octadecenoyl)-sn-glycero-3-phosphocholine + CoA. It catalyses the reaction 1-tetradecanoyl-sn-glycero-3-phosphoethanolamine + (9Z)-octadecenoyl-CoA = 1-tetradecanoyl-2-(9Z-octadecenoyl)-sn-glycero-3-phosphoethanolamine + CoA. The enzyme catalyses 1-(9Z-octadecenoyl)-sn-glycero-3-phospho-L-serine + (9Z)-octadecenoyl-CoA = 1,2-di-(9Z)-octadecenoyl-sn-glycero-3-phospho-L-serine + CoA. The catalysed reaction is a 1-acyl-sn-glycero-3-phospho-(1D-myo-inositol) + (9Z)-octadecenoyl-CoA = a 1-acyl-2-(9Z-octadecenoyl)-sn-glycero-3-phospho-(1D-myo-inositol) + CoA. Its pathway is lipid metabolism; phospholipid metabolism. Its function is as follows. Broad specificity membrane-bound O-acyltransferase that mediates the incorporation of unsaturated acyl chains into the sn-2 position of various lysophospholipids. Preferentially acylates lysophosphocholine (LPC), but also lysophosphoethanolamine (LPE), lysophosphatidylglycerol (LPG), lysophosphatidic acid (LPA), lysophosphoethanolamine (LPE), lysophosphoinositol (LPI), and lysophosphoserine (LPS). Prefers an acyl residue to an alkyl residue at the sn-1 position of lysophospholipid acceptors. Accepts acyl chains in acyl-CoA from C-2 to C-20, and shows strong preference for unsaturated acyl-CoAs with 16-20 carbons. Together with SLC1, plays a central role in phosphatidic acid (PA) biosynthesis. PA is the intermediate, from which all glycerophospholipids are synthesized. Can also introduce an acyl chain at the sn-1 position of the lysophosphatidylcholine analog 1-hydroxy-2-hexadecyl-sn-glycero-3-phosphocholine (HHPC). In Saccharomyces cerevisiae (strain ATCC 204508 / S288c) (Baker's yeast), this protein is Lysophospholipid acyltransferase.